We begin with the raw amino-acid sequence, 313 residues long: Aspartate carbamoyltransferase catalytic subunit (313 aa).

R58 and T59 together coordinate carbamoyl phosphate. Residue K86 coordinates L-aspartate. Positions 108, 136, and 139 each coordinate carbamoyl phosphate. L-aspartate contacts are provided by R169 and R223. Carbamoyl phosphate is bound by residues G265 and P266.

The protein belongs to the aspartate/ornithine carbamoyltransferase superfamily. ATCase family. Heterododecamer (2C3:3R2) of six catalytic PyrB chains organized as two trimers (C3), and six regulatory PyrI chains organized as three dimers (R2).

The enzyme catalyses carbamoyl phosphate + L-aspartate = N-carbamoyl-L-aspartate + phosphate + H(+). Its pathway is pyrimidine metabolism; UMP biosynthesis via de novo pathway; (S)-dihydroorotate from bicarbonate: step 2/3. Functionally, catalyzes the condensation of carbamoyl phosphate and aspartate to form carbamoyl aspartate and inorganic phosphate, the committed step in the de novo pyrimidine nucleotide biosynthesis pathway. This is Aspartate carbamoyltransferase catalytic subunit from Anaeromyxobacter dehalogenans (strain 2CP-C).